Consider the following 187-residue polypeptide: Probable carboxylesterase Culp7 (187 aa).

C15 and C69 form a disulfide bridge. Catalysis depends on S80, which acts as the Nucleophile. C151 and C158 are joined by a disulfide. D155 is an active-site residue. Catalysis depends on H167, which acts as the Proton donor/acceptor.

Belongs to the cutinase family.

It localises to the cytoplasm. The protein localises to the cell membrane. It is found in the secreted. Its subcellular location is the cell wall. May have a role in cell wall processes. Does not exhibit cutinase activity. The sequence is that of Probable carboxylesterase Culp7 from Mycobacterium tuberculosis (strain ATCC 25618 / H37Rv).